A 1010-amino-acid chain; its full sequence is Importin-8 (1010 aa).

Residues 22 to 102 (AETELNQSYK…RDNIVEGIIR (81 aa)) form the Importin N-terminal domain. Basic and acidic residues predominate over residues 886–895 (NHSKAEKVDI). Positions 886 to 932 (NHSKAEKVDIEENEEISSEEEEETSVSAQAMQSQIGRSEEEDDDDWD) are disordered. Acidic residues predominate over residues 896–909 (EENEEISSEEEEET). Phosphoserine occurs at positions 902 and 903. The segment covering 910–921 (SVSAQAMQSQIG) has biased composition (polar residues).

It belongs to the importin beta family. Forms a heterodimer with KPNB1. Interacts with SRP19. Interacts with RPL23A. Binds directly to nuclear pore complexes. Interacts with LRPPRC; the interaction occurs when LRPPRC is in its RNA-free form and promotes import of LRPPRC to the nucleus to allow for EIF4E-mediated export of mRNAS from the nucleus to the cytoplasm.

It is found in the cytoplasm. The protein localises to the nucleus. Involved in nuclear protein import, either by acting as autonomous nuclear transport receptor or as an adapter-like protein in association with the importin-beta subunit KPNB1. Acting autonomously, may serve as receptor for nuclear localization signals (NLS) and promote translocation of import substrates through the nuclear pore complex (NPC) by an energy requiring, Ran-dependent mechanism. At the nucleoplasmic side of the NPC, Ran binds to importin, the importin/substrate complex dissociates and importin is re-exported from the nucleus to the cytoplasm where GTP hydrolysis releases Ran. The directionality of nuclear import is thought to be conferred by an asymmetric distribution of the GTP- and GDP-bound forms of Ran between the cytoplasm and nucleus. In vitro mediates the nuclear import of the signal recognition particle protein SRP19. May also be involved in cytoplasm-to-nucleus shuttling of a broad spectrum of other cargos, including Argonaute-microRNAs complexes, the JUN protein, RELA/NF-kappa-B p65 subunit, the translation initiation factor EIF4E and a set of receptor-activated mothers against decapentaplegic homolog (SMAD) transcription factors that play a critical role downstream of the large family of transforming growth factor beta and bone morphogenetic protein (BMP) cytokines. In Mus musculus (Mouse), this protein is Importin-8.